The primary structure comprises 416 residues: Enterobactin exporter EntS (416 aa).

The Cytoplasmic segment spans residues 1-21 (MNKQSWLLNLSLLKTHPAFRA). Residues 22–42 (VFLARFISIVSLGLLGVAVPV) form a helical membrane-spanning segment. Topologically, residues 43-55 (QIQMMTHSTWQVG) are periplasmic. The helical transmembrane segment at 56–76 (LSVTLTGGAMFVGLMVGGVLA) threads the bilayer. Topologically, residues 77–83 (DRYERKK) are cytoplasmic. A helical membrane pass occupies residues 84–104 (VILLARGTCGIGFIGLCLNAL). Topologically, residues 105 to 109 (LPEPS) are periplasmic. The chain crosses the membrane as a helical span at residues 110–130 (LLAIYLLGLWDGFFASLGVTA). Residues 131-156 (LLAATPALVGRENLMQAGAITMLTVR) lie on the Cytoplasmic side of the membrane. The helical transmembrane segment at 157-177 (LGSVISPMIGGLLLATGGVAW) threads the bilayer. Residue asparagine 178 is a topological domain, periplasmic. The chain crosses the membrane as a helical span at residues 179–199 (YGLAAAGTFITLLPLLSLPAL). The Cytoplasmic portion of the chain corresponds to 200-218 (PPPPQPREHPLKSLLAGFR). The helical transmembrane segment at 219-239 (FLLASPLVGGIALLGGLLTMA) threads the bilayer. At 240–256 (SAVRVLYPALADNWQMS) the chain is on the periplasmic side. A helical transmembrane segment spans residues 257–277 (AAQIGFLYAAIPLGAAIGALT). The Cytoplasmic segment spans residues 278 to 287 (SGKLAHSVRP). A helical membrane pass occupies residues 288-307 (GLLMLLSTLGAFLAIGLFGL). Over 308-313 (MPMWIL) the chain is Periplasmic. A helical membrane pass occupies residues 314–336 (GVVCLALFGWLSAVSSLLQYTML). The Cytoplasmic segment spans residues 337 to 356 (QTQTPEAMLGRINGLWTAQN). A helical transmembrane segment spans residues 357–377 (VTGDAIGAALLGGLGAMMTPV). Residue alanine 378 is a topological domain, periplasmic. The chain crosses the membrane as a helical span at residues 379-399 (SASASGFGLLIIGVLLLLVLV). The Cytoplasmic segment spans residues 400–416 (ELRRFRQTPPQVTASDS).

It belongs to the major facilitator superfamily. EntS (TC 2.A.1.38) family.

The protein localises to the cell inner membrane. Component of an export pathway for enterobactin. This chain is Enterobactin exporter EntS, found in Escherichia coli O6:H1 (strain CFT073 / ATCC 700928 / UPEC).